Here is a 217-residue protein sequence, read N- to C-terminus: Pyridoxine/pyridoxamine 5'-phosphate oxidase (217 aa).

Substrate-binding positions include 14 to 17 (RKSY) and Lys-72. FMN is bound by residues 67-72 (RVVLIK), 82-83 (YT), Arg-88, and Lys-89. 3 residues coordinate substrate: Tyr-129, Arg-133, and Ser-137. Residues 146-147 (QS) and Trp-190 contribute to the FMN site. Residue 196 to 198 (RLH) participates in substrate binding. Arg-200 lines the FMN pocket.

It belongs to the pyridoxamine 5'-phosphate oxidase family. As to quaternary structure, homodimer. FMN is required as a cofactor.

The enzyme catalyses pyridoxamine 5'-phosphate + O2 + H2O = pyridoxal 5'-phosphate + H2O2 + NH4(+). It catalyses the reaction pyridoxine 5'-phosphate + O2 = pyridoxal 5'-phosphate + H2O2. The protein operates within cofactor metabolism; pyridoxal 5'-phosphate salvage; pyridoxal 5'-phosphate from pyridoxamine 5'-phosphate: step 1/1. It participates in cofactor metabolism; pyridoxal 5'-phosphate salvage; pyridoxal 5'-phosphate from pyridoxine 5'-phosphate: step 1/1. Its function is as follows. Catalyzes the oxidation of either pyridoxine 5'-phosphate (PNP) or pyridoxamine 5'-phosphate (PMP) into pyridoxal 5'-phosphate (PLP). The protein is Pyridoxine/pyridoxamine 5'-phosphate oxidase of Acidovorax sp. (strain JS42).